A 234-amino-acid chain; its full sequence is Thiamine-phosphate synthase (234 aa).

4-amino-2-methyl-5-(diphosphooxymethyl)pyrimidine contacts are provided by residues 65-69 and asparagine 97; that span reads QYRNK. Mg(2+) is bound by residues aspartate 98 and aspartate 117. Serine 136 is a 4-amino-2-methyl-5-(diphosphooxymethyl)pyrimidine binding site. 163-165 serves as a coordination point for 2-[(2R,5Z)-2-carboxy-4-methylthiazol-5(2H)-ylidene]ethyl phosphate; the sequence is SHT. 4-amino-2-methyl-5-(diphosphooxymethyl)pyrimidine is bound at residue lysine 166. 2-[(2R,5Z)-2-carboxy-4-methylthiazol-5(2H)-ylidene]ethyl phosphate is bound by residues glycine 192 and 212 to 213; that span reads IS.

The protein belongs to the thiamine-phosphate synthase family. Requires Mg(2+) as cofactor.

The enzyme catalyses 2-[(2R,5Z)-2-carboxy-4-methylthiazol-5(2H)-ylidene]ethyl phosphate + 4-amino-2-methyl-5-(diphosphooxymethyl)pyrimidine + 2 H(+) = thiamine phosphate + CO2 + diphosphate. It carries out the reaction 2-(2-carboxy-4-methylthiazol-5-yl)ethyl phosphate + 4-amino-2-methyl-5-(diphosphooxymethyl)pyrimidine + 2 H(+) = thiamine phosphate + CO2 + diphosphate. The catalysed reaction is 4-methyl-5-(2-phosphooxyethyl)-thiazole + 4-amino-2-methyl-5-(diphosphooxymethyl)pyrimidine + H(+) = thiamine phosphate + diphosphate. It participates in cofactor biosynthesis; thiamine diphosphate biosynthesis; thiamine phosphate from 4-amino-2-methyl-5-diphosphomethylpyrimidine and 4-methyl-5-(2-phosphoethyl)-thiazole: step 1/1. In terms of biological role, condenses 4-methyl-5-(beta-hydroxyethyl)thiazole monophosphate (THZ-P) and 2-methyl-4-amino-5-hydroxymethyl pyrimidine pyrophosphate (HMP-PP) to form thiamine monophosphate (TMP). The chain is Thiamine-phosphate synthase from Xylella fastidiosa (strain Temecula1 / ATCC 700964).